Here is a 250-residue protein sequence, read N- to C-terminus: 3-deoxy-manno-octulosonate cytidylyltransferase (250 aa).

It belongs to the KdsB family.

It is found in the cytoplasm. The catalysed reaction is 3-deoxy-alpha-D-manno-oct-2-ulosonate + CTP = CMP-3-deoxy-beta-D-manno-octulosonate + diphosphate. Its pathway is nucleotide-sugar biosynthesis; CMP-3-deoxy-D-manno-octulosonate biosynthesis; CMP-3-deoxy-D-manno-octulosonate from 3-deoxy-D-manno-octulosonate and CTP: step 1/1. It participates in bacterial outer membrane biogenesis; lipopolysaccharide biosynthesis. Activates KDO (a required 8-carbon sugar) for incorporation into bacterial lipopolysaccharide in Gram-negative bacteria. This Pectobacterium atrosepticum (strain SCRI 1043 / ATCC BAA-672) (Erwinia carotovora subsp. atroseptica) protein is 3-deoxy-manno-octulosonate cytidylyltransferase.